The sequence spans 230 residues: 2,3-bisphosphoglycerate-dependent phosphoglycerate mutase (230 aa).

Residues 8-15 (RHGQSIWN), 21-22 (TG), Arg-60, 87-90 (ERHY), Lys-98, and 114-115 (RR) each bind substrate. The active-site Tele-phosphohistidine intermediate is His-9. The active-site Proton donor/acceptor is Glu-87. The segment at 117–143 (YDTPPPALDAEDERHPRHDPRYAGLDP) is disordered. Residues 128–137 (DERHPRHDPR) show a composition bias toward basic and acidic residues. Position 183–184 (183–184 (GN)) interacts with substrate.

The protein belongs to the phosphoglycerate mutase family. BPG-dependent PGAM subfamily. As to quaternary structure, homodimer.

It carries out the reaction (2R)-2-phosphoglycerate = (2R)-3-phosphoglycerate. Its pathway is carbohydrate degradation; glycolysis; pyruvate from D-glyceraldehyde 3-phosphate: step 3/5. Catalyzes the interconversion of 2-phosphoglycerate and 3-phosphoglycerate. In Halorhodospira halophila (strain DSM 244 / SL1) (Ectothiorhodospira halophila (strain DSM 244 / SL1)), this protein is 2,3-bisphosphoglycerate-dependent phosphoglycerate mutase.